The sequence spans 224 residues: Testis-expressed protein 30 (224 aa).

The polypeptide is Testis-expressed protein 30 (TEX30) (Bos taurus (Bovine)).